Here is a 420-residue protein sequence, read N- to C-terminus: Gamma-glutamyl phosphate reductase (420 aa).

This sequence belongs to the gamma-glutamyl phosphate reductase family.

Its subcellular location is the cytoplasm. It carries out the reaction L-glutamate 5-semialdehyde + phosphate + NADP(+) = L-glutamyl 5-phosphate + NADPH + H(+). It participates in amino-acid biosynthesis; L-proline biosynthesis; L-glutamate 5-semialdehyde from L-glutamate: step 2/2. Functionally, catalyzes the NADPH-dependent reduction of L-glutamate 5-phosphate into L-glutamate 5-semialdehyde and phosphate. The product spontaneously undergoes cyclization to form 1-pyrroline-5-carboxylate. In Laribacter hongkongensis (strain HLHK9), this protein is Gamma-glutamyl phosphate reductase.